A 329-amino-acid chain; its full sequence is Glycerol-3-phosphate dehydrogenase [NAD(P)+] (329 aa).

Positions 11 and 101 each coordinate NADPH. Residues Lys-101, Gly-132, and Ser-134 each contribute to the sn-glycerol 3-phosphate site. Ala-136 serves as a coordination point for NADPH. Sn-glycerol 3-phosphate contacts are provided by Lys-188, Asp-241, Ser-251, Arg-252, and Asn-253. Lys-188 (proton acceptor) is an active-site residue. Arg-252 is an NADPH binding site. NADPH is bound at residue Glu-278.

Belongs to the NAD-dependent glycerol-3-phosphate dehydrogenase family.

The protein localises to the cytoplasm. The enzyme catalyses sn-glycerol 3-phosphate + NAD(+) = dihydroxyacetone phosphate + NADH + H(+). It carries out the reaction sn-glycerol 3-phosphate + NADP(+) = dihydroxyacetone phosphate + NADPH + H(+). It functions in the pathway membrane lipid metabolism; glycerophospholipid metabolism. Functionally, catalyzes the reduction of the glycolytic intermediate dihydroxyacetone phosphate (DHAP) to sn-glycerol 3-phosphate (G3P), the key precursor for phospholipid synthesis. This Onion yellows phytoplasma (strain OY-M) protein is Glycerol-3-phosphate dehydrogenase [NAD(P)+].